The following is a 178-amino-acid chain: MSLLDHKFGQGGIVVSQLEDVLNWARLSSLFPMSFGLACCAIEMMQTFTSGYDLDRFGVIPRPSPRQSDVMIVAGTVTFKMADRIRRLYEQMPEPRYVISMGSCSNCGGPYWEHGYHVVKGVDRIVPVDIYVPGCPPRPEALIGGFLKLQEKIRKETLVAPKAVERFLETHAKEKNIA.

4 residues coordinate [4Fe-4S] cluster: Cys-39, Cys-40, Cys-104, and Cys-135.

It belongs to the complex I 20 kDa subunit family. NDH-1 is composed of 14 different subunits. Subunits NuoB, C, D, E, F, and G constitute the peripheral sector of the complex. [4Fe-4S] cluster serves as cofactor.

It localises to the cell inner membrane. It carries out the reaction a quinone + NADH + 5 H(+)(in) = a quinol + NAD(+) + 4 H(+)(out). Functionally, NDH-1 shuttles electrons from NADH, via FMN and iron-sulfur (Fe-S) centers, to quinones in the respiratory chain. The immediate electron acceptor for the enzyme in this species is believed to be a menaquinone. Couples the redox reaction to proton translocation (for every two electrons transferred, four hydrogen ions are translocated across the cytoplasmic membrane), and thus conserves the redox energy in a proton gradient. This is NADH-quinone oxidoreductase subunit B 1 from Cytophaga hutchinsonii (strain ATCC 33406 / DSM 1761 / CIP 103989 / NBRC 15051 / NCIMB 9469 / D465).